The chain runs to 344 residues: Follistatin (344 aa).

Residues 1–29 form the signal peptide; it reads MVCARHQPGGLCLLLLLLCQFMEDRSAQA. The 74-residue stretch at 30–103 folds into the TB domain; sequence GNCWLRQAKN…TCENVDCGPG (74 aa). Intrachain disulfides connect Cys32/Cys55, Cys42/Cys88, Cys56/Cys91, Cys95/Cys106, Cys100/Cys116, Cys118/Cys150, Cys122/Cys143, Cys132/Cys164, Cys168/Cys179, Cys173/Cys189, Cys192/Cys225, Cys196/Cys218, Cys207/Cys239, Cys245/Cys256, Cys250/Cys267, Cys270/Cys302, Cys274/Cys295, and Cys284/Cys316. The 24-residue stretch at 94–117 folds into the Follistatin-like 1 domain; sequence TCENVDCGPGKKCRMNKKNKPRCV. The Kazal-like 1 domain occupies 112–166; sequence NKPRCVCAPDCSNITWKGPVCGLDGKTYRNECALLKARCKEQPELEVQYQGKCKK. Asn124 is a glycosylation site (N-linked (GlcNAc...) asparagine). Positions 167 to 190 constitute a Follistatin-like 2 domain; sequence TCRDVFCPGSSTCVVDQTNNAYCV. In terms of domain architecture, Kazal-like 2 spans 186-241; sequence NAYCVTCNRICPEPSSSEQSLCGNDGVTYSSACHLRKATCLLGRSIGLAYEGKCIK. The Follistatin-like 3 domain occupies 244-268; it reads SCEDIQCGGGKKCLWDFKVGRGRCS. Positions 264 to 318 constitute a Kazal-like 3 domain; it reads RGRCSLCDELCPDSKSDEPVCASDNATYASECAMKEAACSSGVLLEVKHSGSCNS. N-linked (GlcNAc...) asparagine glycosylation occurs at Asn288. Residues 315–344 form a disordered region; it reads SCNSISEETEEEEEEEDQDYSFPISSTLEW. A compositionally biased stretch (acidic residues) spans 321 to 333; that stretch reads EETEEEEEEEDQD.

In terms of assembly, interacts with GDF11. Interacts with activin A/INHBA. Interacts with myostatin/MSTN.

The protein localises to the secreted. The protein resides in the nucleus. It is found in the nucleolus. Multifunctional regulatory protein whose primary function is to antagonize members of the transforming growth factor beta (TGF-beta) superfamily including activin, myostatin, GDF11 or bone morphogenetic proteins (BMPs). Mechanistically, binds to these ligands in the extracellular space, blocking their type II receptor-binding site to inhibit downstream signaling. Plays an essential role in muscle fiber formation and growth both by preventing the repressive effects of myostatin and through SMAD3/AKT/mTOR signaling independently of myostatin. Also promotes neural differentiation by antagonizing the action BMP4. Acts as a specific inhibitor of the biosynthesis and secretion of pituitary follicle stimulating hormone (FSH) by sequestering activin A/INHBA. On the other hand, translocates into the nucleus where it down-regulates rRNA synthesis and ribosome biogenesis to maintain cellular energy homeostasis by binding to rDNA. The sequence is that of Follistatin from Rattus norvegicus (Rat).